The sequence spans 127 residues: uncharacterized protein (127 aa).

This is an uncharacterized protein from Methanocaldococcus jannaschii (strain ATCC 43067 / DSM 2661 / JAL-1 / JCM 10045 / NBRC 100440) (Methanococcus jannaschii).